A 316-amino-acid chain; its full sequence is tRNA dimethylallyltransferase (316 aa).

ATP is bound at residue 17 to 24; the sequence is GPTASGKT. 19–24 is a binding site for substrate; that stretch reads TASGKT. Interaction with substrate tRNA stretches follow at residues 42-45, 166-170, 247-252, and 280-287; these read DSAL, QRLSR, RCVGYR, and KRQITWLR.

Belongs to the IPP transferase family. Monomer. Mg(2+) serves as cofactor.

It catalyses the reaction adenosine(37) in tRNA + dimethylallyl diphosphate = N(6)-dimethylallyladenosine(37) in tRNA + diphosphate. Its function is as follows. Catalyzes the transfer of a dimethylallyl group onto the adenine at position 37 in tRNAs that read codons beginning with uridine, leading to the formation of N6-(dimethylallyl)adenosine (i(6)A). This chain is tRNA dimethylallyltransferase, found in Cronobacter sakazakii (strain ATCC BAA-894) (Enterobacter sakazakii).